The primary structure comprises 159 residues: Globin CTT-W (159 aa).

The first 16 residues, 1 to 16 (MKFLVILTLCIAGAIA), serve as a signal peptide directing secretion. The region spanning 17-159 (HCDKAPFIKA…HHAIVYSILE (143 aa)) is the Globin domain. Positions 73 and 108 each coordinate heme b.

It belongs to the globin family.

The chain is Globin CTT-W (CTT-W) from Chironomus thummi piger (Midge).